The sequence spans 116 residues: NADH-ubiquinone oxidoreductase chain 3 (116 aa).

The next 3 membrane-spanning stretches (helical) occupy residues 3–23, 56–76, and 87–107; these read LITT…TISF, FFLI…LLPL, and LTLI…IYEW.

Belongs to the complex I subunit 3 family.

It localises to the mitochondrion membrane. It catalyses the reaction a ubiquinone + NADH + 5 H(+)(in) = a ubiquinol + NAD(+) + 4 H(+)(out). Core subunit of the mitochondrial membrane respiratory chain NADH dehydrogenase (Complex I) that is believed to belong to the minimal assembly required for catalysis. Complex I functions in the transfer of electrons from NADH to the respiratory chain. The immediate electron acceptor for the enzyme is believed to be ubiquinone. This chain is NADH-ubiquinone oxidoreductase chain 3 (MT-ND3), found in Oncorhynchus tshawytscha (Chinook salmon).